The following is a 981-amino-acid chain: Rab3 GTPase-activating protein catalytic subunit (981 aa).

Residues S83, S379, S536, S579, S581, and S590 each carry the phosphoserine modification. Residues 532 to 558 (GKKTSLSDSTTSAYPGDAGKTGGQLGL) form a disordered region. Residues 591–614 (DTEDLKGNGQESGKKGGPKEMANL) are disordered. At S664 the chain carries Phosphoserine.

It belongs to the Rab3-GAP catalytic subunit family. In terms of assembly, the Rab3 GTPase-activating complex is a heterodimer composed of Rab3gap1 and Rab3gap2. The Rab3 GTPase-activating complex interacts with DMXL2. Interacts with LMAN1. In the eye, it is highly expressed within the lens, particularly in the anterior lens epithelium and in a ring corresponding to the equatorial region where anterior cells are differentiating into lens fibers. Also highly expressed in the retina.

It localises to the cytoplasm. The protein localises to the endoplasmic reticulum. The protein resides in the golgi apparatus. Its subcellular location is the cis-Golgi network. Functionally, catalytic subunit of the Rab3 GTPase-activating (Rab3GAP) complex composed of RAB3GAP1 and RAB3GAP2, which has GTPase-activating protein (GAP) activity towards various Rab3 subfamily members (RAB3A, RAB3B, RAB3C and RAB3D), RAB5A and RAB43, and guanine nucleotide exchange factor (GEF) activity towards RAB18. As part of the Rab3GAP complex, acts as a GAP for Rab3 proteins by converting active RAB3-GTP to the inactive form RAB3-GDP. Rab3 proteins are involved in regulated exocytosis of neurotransmitters and hormones. The Rab3GAP complex, acts as a GEF for RAB18 by promoting the conversion of inactive RAB18-GDP to the active form RAB18-GTP. Recruits and stabilizes RAB18 at the cis-Golgi membrane where RAB18 is most likely activated. Also involved in RAB18 recruitment at the endoplasmic reticulum (ER) membrane where it maintains proper ER structure. Required for normal eye and brain development. May participate in neurodevelopmental processes such as proliferation, migration and differentiation before synapse formation, and non-synaptic vesicular release of neurotransmitters. This is Rab3 GTPase-activating protein catalytic subunit from Mus musculus (Mouse).